The chain runs to 257 residues: 6-phosphogluconolactonase (257 aa).

Ala-2 carries the post-translational modification N-acetylalanine. At Ser-49 the chain carries Phosphoserine. Lys-180 carries the N6-acetyllysine modification.

This sequence belongs to the glucosamine/galactosamine-6-phosphate isomerase family. 6-phosphogluconolactonase subfamily.

It localises to the cytoplasm. The enzyme catalyses 6-phospho-D-glucono-1,5-lactone + H2O = 6-phospho-D-gluconate + H(+). It participates in carbohydrate degradation; pentose phosphate pathway; D-ribulose 5-phosphate from D-glucose 6-phosphate (oxidative stage): step 2/3. Functionally, hydrolysis of 6-phosphogluconolactone to 6-phosphogluconate. In Rattus norvegicus (Rat), this protein is 6-phosphogluconolactonase.